The sequence spans 146 residues: Basic phospholipase A2 73 (146 aa).

A signal peptide spans 1 to 19 (MYPAHLLVLLAVCVSLLGA). Positions 20–27 (ASIPPLPL) are excised as a propeptide. Cystine bridges form between Cys38-Cys98, Cys54-Cys145, Cys56-Cys72, Cys71-Cys126, Cys78-Cys119, Cys87-Cys112, and Cys105-Cys117. Tyr55, Gly57, and Gly59 together coordinate Ca(2+). Residue His75 is part of the active site. Residue Asp76 participates in Ca(2+) binding. Asp120 is an active-site residue.

This sequence belongs to the phospholipase A2 family. Group I subfamily. D49 sub-subfamily. The cofactor is Ca(2+). As to expression, expressed by the venom gland.

The protein localises to the secreted. The catalysed reaction is a 1,2-diacyl-sn-glycero-3-phosphocholine + H2O = a 1-acyl-sn-glycero-3-phosphocholine + a fatty acid + H(+). Functionally, snake venom phospholipase A2 (PLA2) that inhibits neuromuscular transmission by blocking acetylcholine release from the nerve termini. PLA2 catalyzes the calcium-dependent hydrolysis of the 2-acyl groups in 3-sn-phosphoglycerides. The chain is Basic phospholipase A2 73 from Hydrophis hardwickii (Hardwick's spine-bellied seasnake).